A 185-amino-acid polypeptide reads, in one-letter code: MISAGDLRKGTTFEQDGQVYVVVEFLHVKPGKGAAFVRTKLKNAITGAVTETTFNPTAKLQEAVIERKEMQYLYTDGELYYFMDQETFEQIPLNYDKVEEAIKFLKENMFATIKFFKGEAFSVEAPNFVELLISHTEPGAKGNTTSNVMKPATLETGATIQVPLFVNEGETIRVDTRTGEYMERV.

It belongs to the elongation factor P family.

The protein resides in the cytoplasm. The protein operates within protein biosynthesis; polypeptide chain elongation. Functionally, involved in peptide bond synthesis. Stimulates efficient translation and peptide-bond synthesis on native or reconstituted 70S ribosomes in vitro. Probably functions indirectly by altering the affinity of the ribosome for aminoacyl-tRNA, thus increasing their reactivity as acceptors for peptidyl transferase. This chain is Elongation factor P, found in Clostridium botulinum (strain ATCC 19397 / Type A).